The sequence spans 667 residues: Fatty acyl-CoA synthetase A (667 aa).

Belongs to the ATP-dependent AMP-binding enzyme family.

It is found in the endosome membrane. It catalyses the reaction a long-chain fatty acid + ATP + CoA = a long-chain fatty acyl-CoA + AMP + diphosphate. Functionally, long chain fatty acid acyl-CoA synthetases catalyze the formation of a thiester bond between a free fatty acid and coenzyme A during fatty acid metabolic process. May mediate fatty acid retrieval from the lumen of endosomes into the cytoplasm. The sequence is that of Fatty acyl-CoA synthetase A (fcsA) from Dictyostelium discoideum (Social amoeba).